Reading from the N-terminus, the 926-residue chain is MKKTRSTTLRRAWPSSDFSDRASDRMRSRSEKDYRLHKRFPAAFAPQASRGYMTSGDVSPISMSPISQSQFIPLGEILCLAISAMNSARKPVTQEALMEHLTTCFPGVPTPSQEILRHTLNTLVRERKIYPTPDGYFIVTPQTYFITPSLIRTNSKWYHLDERIPDRSQCTSPQPGTITPSASGCVRERTLPRNHCDSCHCCREDVHSTHAPTLQRKSAKDCKDPYCPPSLCQVPPTEKSKSTVNFSYKTETLSKPKDSEKQSKKFGLKLFRLSFKKDKTKQLANFSAQFPPEEWPLRDEDTPATIPREVEMEIIRRINPDLTVENVMRHTALMKKLEEEKAQRSKAGSSAHHSGRSKKSRTHRKSHGKSRSHSKTRVSKGDPSDGSHLDIPAEREYDFCDPLTRVPREGCFIIEHKGDNFIMHSNTNVLESHFPMTPEWDVSGELAKRRTEMPFPEPSRGSSHSKVHRSHSHTQDRRSRNERSNKAKERSRSMDNSKGPLGASSLGTPEDLAEGCSQDDQTPSQSYIDDSTLRPAQTVSLQRAHISSTSYKEVCIPEIVSGSKEPSSACSLLEPGKPPESLPSYGELNSCPTKTATDDYFQCNTSSETVLTAPSPLGKNKEDHDTLTLAEGVKKLSPSDRQVPHSSREPVGHKEESPKGPGGGPAASGGVAEGIANGRLVQHHGAEPSSLDKRKEIFSKDTLFKPLHSTLSVNSYHKSSLSLLKSHPKTPADTLPGRCEKLEPSLGTSAAQAMPASQRQQESGGNQEASFDYYNVSDDDDSEEGANKNTEEEKNREDVGTMQWLLEREKERDLQRKFEKNLTLLAPKETDSSSNQRATHSARLDSMDSSSITVDSGFNSPRTRESLASNTSSIVESNRRQNPALSPAHGGAGPAFNFRASAEPPTNEAEKLQKPSNCLQASVTSV.

Disordered stretches follow at residues 1 to 32, 338 to 391, 452 to 529, 564 to 588, 632 to 672, 724 to 803, and 825 to 926; these read MKKT…RSEK, EEEK…HLDI, EMPF…SYID, KEPS…YGEL, GVKK…GGVA, LKSH…GTMQ, and LAPK…VTSV. Over residues 18-32 the composition is skewed to basic and acidic residues; sequence FSDRASDRMRSRSEK. Basic residues predominate over residues 353-378; the sequence is HSGRSKKSRTHRKSHGKSRSHSKTRV. Over residues 379–391 the composition is skewed to basic and acidic residues; the sequence is SKGDPSDGSHLDI. Over residues 463–472 the composition is skewed to basic residues; it reads SHSKVHRSHS. A compositionally biased stretch (basic and acidic residues) spans 473–495; that stretch reads HTQDRRSRNERSNKAKERSRSMD. The segment covering 518-529 has biased composition (polar residues); that stretch reads QDDQTPSQSYID. The span at 632 to 658 shows a compositional bias: basic and acidic residues; it reads GVKKLSPSDRQVPHSSREPVGHKEESP. Residues 746 to 769 are compositionally biased toward polar residues; the sequence is LGTSAAQAMPASQRQQESGGNQEA. Positions 785 to 799 are enriched in basic and acidic residues; the sequence is GANKNTEEEKNREDV. Composition is skewed to polar residues over residues 847 to 884 and 914 to 926; these read MDSS…QNPA and KPSN…VTSV.

This Homo sapiens (Human) protein is Storkhead-box protein 2 (STOX2).